Consider the following 651-residue polypeptide: DNA mismatch repair protein MutL (651 aa).

The segment at 336 to 398 (RLDMTEPETG…ANSGYQPENP (63 aa)) is disordered. Positions 385-394 (ARESANSGYQ) are enriched in polar residues.

It belongs to the DNA mismatch repair MutL/HexB family.

This protein is involved in the repair of mismatches in DNA. It is required for dam-dependent methyl-directed DNA mismatch repair. May act as a 'molecular matchmaker', a protein that promotes the formation of a stable complex between two or more DNA-binding proteins in an ATP-dependent manner without itself being part of a final effector complex. The polypeptide is DNA mismatch repair protein MutL (Pectobacterium atrosepticum (strain SCRI 1043 / ATCC BAA-672) (Erwinia carotovora subsp. atroseptica)).